The sequence spans 563 residues: MPLPWISLIWFAYLIVITVLIVVASVFIHVYQTPRDRSSFVTFMCVFSIAALLATVMLLPVDVALVSSTTSSALGQRKEWATQEEVDKITYSLTVIYYSLYFLDALLCLVGIPFAYFWHEEYDEVAFEAGDQTPCKRFWAATKYTLAFIAVVIALVLVGFFAPMSESQPGHDLGYWRGFLIENRGEHAFTFLLGFVTTIGSCLYVFYTPSGLALLPALFLRRSYSFANQTLVGSTAMQLDFNRERQRQLEGRCGGNSALLSPKDRRELDTLVREERTLIRRQRLIEGRQEEDQSWPVTVYSKLKTILRPFRLLGGFSLFLVGLSTWISLLMTVIDKLINSPCKHHCGYVLSRTNFNPISWLLIQSSRAFPTDYIIFALIVFLFFWGSVVGVVAVGIRFLWIRIFQIRKGHTSPQAMLLATAMLTLITLGLNYSVVMMLAPRYATFGPQTFCDLAPTSSEEQPDCSNHWHLVKPCSEKADSTAADNTCTPSVASTILNRVALNFPLFGALLLWAHFLFLGIYLVILVASLVRSPRLDERQLDEDAEEAEEESLLASTGRSGNPT.

Helical transmembrane passes span 8–28 (LIWF…SVFI), 40–60 (FVTF…MLLP), 95–115 (VIYY…IPFA), 144–164 (YTLA…FAPM), and 188–208 (AFTF…VFYT). N-linked (GlcNAc...) asparagine glycosylation occurs at Asn-228. Transmembrane regions (helical) follow at residues 314–334 (GGFS…MTVI), 374–394 (IIFA…VVAV), 416–436 (MLLA…SVVM), and 506–526 (FGAL…VILV). The segment at 537-563 (ERQLDEDAEEAEEESLLASTGRSGNPT) is disordered. The span at 539-551 (QLDEDAEEAEEES) shows a compositional bias: acidic residues.

It belongs to the LIMR family. LMBRD1 subfamily.

The protein localises to the lysosome membrane. In terms of biological role, probable lysosomal cobalamin transporter. Required to export cobalamin from lysosomes allowing its conversion to cofactors. The polypeptide is Probable lysosomal cobalamin transporter (Neosartorya fischeri (strain ATCC 1020 / DSM 3700 / CBS 544.65 / FGSC A1164 / JCM 1740 / NRRL 181 / WB 181) (Aspergillus fischerianus)).